The primary structure comprises 63 residues: Large ribosomal subunit protein uL30 (63 aa).

Belongs to the universal ribosomal protein uL30 family. In terms of assembly, part of the 50S ribosomal subunit.

This Bradyrhizobium sp. (strain ORS 278) protein is Large ribosomal subunit protein uL30.